The chain runs to 454 residues: Histidine--tRNA ligase (454 aa).

This sequence belongs to the class-II aminoacyl-tRNA synthetase family. In terms of assembly, homodimer.

Its subcellular location is the cytoplasm. The catalysed reaction is tRNA(His) + L-histidine + ATP = L-histidyl-tRNA(His) + AMP + diphosphate + H(+). The sequence is that of Histidine--tRNA ligase from Phocaeicola vulgatus (strain ATCC 8482 / DSM 1447 / JCM 5826 / CCUG 4940 / NBRC 14291 / NCTC 11154) (Bacteroides vulgatus).